Reading from the N-terminus, the 155-residue chain is Small ribosomal subunit protein bS6 (155 aa).

The interval 94-155 (VKQEGPLPTP…TPELEEQVKS (62 aa)) is disordered. Over residues 103–112 (PRSSNKSSNQ) the composition is skewed to polar residues. Residues 113–141 (AEKKENENIDSANKSEPKADETDNKKKIT) show a composition bias toward basic and acidic residues.

It belongs to the bacterial ribosomal protein bS6 family.

Binds together with bS18 to 16S ribosomal RNA. This chain is Small ribosomal subunit protein bS6, found in Prochlorococcus marinus (strain MIT 9515).